A 158-amino-acid chain; its full sequence is S-ribosylhomocysteine lyase (158 aa).

His-54, His-58, and Cys-124 together coordinate Fe cation.

It belongs to the LuxS family. Homodimer. Requires Fe cation as cofactor.

It carries out the reaction S-(5-deoxy-D-ribos-5-yl)-L-homocysteine = (S)-4,5-dihydroxypentane-2,3-dione + L-homocysteine. Its function is as follows. Involved in the synthesis of autoinducer 2 (AI-2) which is secreted by bacteria and is used to communicate both the cell density and the metabolic potential of the environment. The regulation of gene expression in response to changes in cell density is called quorum sensing. Catalyzes the transformation of S-ribosylhomocysteine (RHC) to homocysteine (HC) and 4,5-dihydroxy-2,3-pentadione (DPD). In Lactiplantibacillus plantarum (strain ATCC BAA-793 / NCIMB 8826 / WCFS1) (Lactobacillus plantarum), this protein is S-ribosylhomocysteine lyase.